The chain runs to 1474 residues: Adhesion G protein-coupled receptor L1 (1474 aa).

The signal sequence occupies residues 1–24; the sequence is MARLAAVLWNLCVTAVLVTSATQG. Topologically, residues 25–858 are extracellular; it reads LSRAGLPFGL…EIYQGRINEL (834 aa). The SUEL-type lectin domain occupies 40-129; the sequence is ACEGYPIELR…KYLEVQYDCV (90 aa). 5 disulfides stabilise this stretch: cysteine 41/cysteine 71, cysteine 50/cysteine 128, cysteine 83/cysteine 115, cysteine 96/cysteine 102, and cysteine 140/cysteine 322. Glutamate 42 contributes to the alpha-L-rhamnose binding site. Asparagine 98 carries an N-linked (GlcNAc...) asparagine glycan. 117 to 120 serves as a coordination point for alpha-L-rhamnose; it reads GTYK. The Olfactomedin-like domain occupies 139 to 398; sequence VCPGTLQKVL…VVRYSLEFGP (260 aa). Residues 400–434 are disordered; that stretch reads DPSAGPATSPPLSTTTTARPTPLTSTASPAATTPL. Low complexity predominate over residues 405 to 434; the sequence is PATSPPLSTTTTARPTPLTSTASPAATTPL. 2 cysteine pairs are disulfide-bonded: cysteine 480/cysteine 515 and cysteine 503/cysteine 532. N-linked (GlcNAc...) asparagine glycans are attached at residues asparagine 531, asparagine 640, asparagine 742, asparagine 801, asparagine 806, and asparagine 827. Residues 669–851 form the GAIN-B domain; sequence PARFLAAKEN…AVLMAHREIY (183 aa). Intrachain disulfides connect cysteine 802/cysteine 833 and cysteine 821/cysteine 835. The tract at residues 802-851 is GPS; the sequence is CSFWNYSERSMLGYWSTQGCRLVESNKTHTTCACSHLTNFAVLMAHREIY. A helical membrane pass occupies residues 859 to 879; the sequence is LLSVITWVGIVISLVCLAICI. At 880-893 the chain is on the cytoplasmic side; it reads STFCFLRGLQTDRN. A helical transmembrane segment spans residues 894–914; that stretch reads TIHKNLCINLFLAELLFLVGI. Residues 915–920 are Extracellular-facing; that stretch reads DKTQYE. A helical transmembrane segment spans residues 921-941; it reads IACPIFAGLLHYFFLAAFSWL. Over 942–964 the chain is Cytoplasmic; that stretch reads CLEGVHLYLLLVEVFESEYSRTK. The helical transmembrane segment at 965–985 threads the bilayer; sequence YYYLGGYCFPALVVGIAAAID. The Extracellular segment spans residues 986 to 1002; the sequence is YRSYGTEKACWLRVDNY. A helical transmembrane segment spans residues 1003-1023; sequence FIWSFIGPVSFVIVVNLVFLM. Residues 1024–1050 are Cytoplasmic-facing; the sequence is VTLHKMIRSSSVLKPDSSRLDNIKSWA. Residues 1051–1071 form a helical membrane-spanning segment; sequence LGAIALLFLLGLTWAFGLLFI. Topologically, residues 1072 to 1075 are extracellular; that stretch reads NKES. A helical transmembrane segment spans residues 1076 to 1096; sequence VVMAYLFTTFNAFQGVFIFVF. At 1097–1474 the chain is on the cytoplasmic side; it reads HCALQKKVHK…DGQMQLVTSL (378 aa). The residue at position 1194 (arginine 1194) is an Omega-N-methylarginine. Serine 1220 is modified (phosphoserine). Disordered regions lie at residues 1248–1273, 1294–1328, 1360–1429, and 1451–1474; these read FNNS…RGRN, RGSS…PGGA, ESES…SRPP, and YLAA…VTSL. Pro residues-rich tracts occupy residues 1302-1314 and 1408-1420; these read GPPP…PPVP and ALPP…PGPP. A Phosphoserine modification is found at serine 1473.

Belongs to the G-protein coupled receptor 2 family. Adhesion G-protein coupled receptor (ADGR) subfamily. Forms a heterodimer, consisting of a large extracellular region (p120) non-covalently linked to a seven-transmembrane moiety (p85). Interacts with syntaxin and with proteins of the SHANK family via the PDZ domain. Interacts (via extracellular domain) with FLRT1, FLRT2 and FLRT3 (via extracellular domain). In terms of processing, autoproteolytically cleaved into 2 subunits, an extracellular subunit and a seven-transmembrane subunit. This proteolytic processing takes place early in the biosynthetic pathway, either in the endoplasmic reticulum or in the early compartment of the Golgi apparatus.

Its subcellular location is the cell membrane. The protein localises to the cell projection. It localises to the axon. It is found in the growth cone. The protein resides in the synapse. Its subcellular location is the presynaptic cell membrane. The protein localises to the synaptosome. Its function is as follows. Calcium-independent receptor of high affinity for alpha-latrotoxin, an excitatory neurotoxin present in black widow spider venom which triggers massive exocytosis from neurons and neuroendocrine cells. Receptor for TENM2 that mediates heterophilic synaptic cell-cell contact and postsynaptic specialization. Receptor probably implicated in the regulation of exocytosis. This chain is Adhesion G protein-coupled receptor L1, found in Homo sapiens (Human).